A 1381-amino-acid polypeptide reads, in one-letter code: Hepatocyte growth factor receptor (1381 aa).

A signal peptide spans 1 to 24 (MKAPAVLAPGILVLLFTLVQKSKG). Over 25–932 (ECKEALVKST…VIVQPDQNFT (908 aa)) the chain is Extracellular. Residues 27–515 (KEALVKSTMN…TGKKITKIPL (489 aa)) form the Sema domain. A glycan (N-linked (GlcNAc...) asparagine) is linked at Asn-45. Intrachain disulfides connect Cys-95/Cys-101, Cys-98/Cys-160, Cys-133/Cys-141, and Cys-173/Cys-176. Asn-106 carries an N-linked (GlcNAc...) asparagine glycan. N-linked (GlcNAc...) asparagine glycans are attached at residues Asn-203 and Asn-359. Cystine bridges form between Cys-299-Cys-364 and Cys-386-Cys-398. Asn-400 and Asn-406 each carry an N-linked (GlcNAc...) asparagine glycan. 4 cysteine pairs are disulfide-bonded: Cys-520–Cys-538, Cys-526–Cys-561, Cys-529–Cys-545, and Cys-541–Cys-551. 3 IPT/TIG domains span residues 563 to 655 (PTVY…FSYV), 657 to 739 (PVIT…FTYR), and 742 to 836 (PIVY…LIYV). O-linked (Man) threonine glycosylation is present at Thr-582. 2 N-linked (GlcNAc...) asparagine glycosylation sites follow: Asn-607 and Asn-635. Residues Thr-676 and Thr-761 are each glycosylated (O-linked (Man) threonine). N-linked (GlcNAc...) asparagine glycosylation is found at Asn-785, Asn-879, and Asn-930. The chain crosses the membrane as a helical span at residues 933 to 955 (GLIVGVVSISIILLLLLGLFLWL). At 956-1381 (KKRKQIKDLG…QDNVDGEGDT (426 aa)) the chain is on the cytoplasmic side. Residue Ser-966 is modified to Phosphoserine. Thr-977 is modified (phosphothreonine). A phosphoserine mark is found at Ser-990 and Ser-997. Tyr-1003 carries the post-translational modification Phosphotyrosine. A Protein kinase domain is found at 1078 to 1345 (VHFNEVIGRG…RISAIFSTFI (268 aa)). ATP-binding positions include 1084 to 1092 (IGRGHFGCV) and Lys-1110. The Proton acceptor role is filled by Asp-1204. Positions 1212–1381 (LDEKFTVKVA…QDNVDGEGDT (170 aa)) are interaction with RANBP9. Tyr-1230 bears the Phosphotyrosine mark. Phosphotyrosine; by autocatalysis is present on residues Tyr-1234 and Tyr-1235. The residue at position 1289 (Thr-1289) is a Phosphothreonine. Residues 1320-1359 (WHPRAELRPSFSELVSRISAIFSTFIGEHYVHVNATYVNV) are interaction with MUC20. A phosphotyrosine; by autocatalysis mark is found at Tyr-1349 and Tyr-1356. Tyr-1365 is modified (phosphotyrosine).

It belongs to the protein kinase superfamily. Tyr protein kinase family. In terms of assembly, heterodimer made of an alpha chain (50 kDa) and a beta chain (145 kDa) which are disulfide linked. Binds PLXNB1. Interacts when phosphorylated with downstream effectors including STAT3, PIK3R1, SRC, PCLG1, GRB2 and GAB1. Interacts with SPSB1, SPSB2 and SPSB4. Interacts with INPP5D/SHIP1. When phosphorylated at Tyr-1356, interacts with INPPL1/SHIP2. Interacts with RANBP9 and RANBP10, as well as SPSB1, SPSB2, SPSB3 and SPSB4. SPSB1 binding occurs in the presence and in the absence of HGF, however HGF treatment has a positive effect on this interaction. Interacts with MUC20; prevents interaction with GRB2 and suppresses hepatocyte growth factor-induced cell proliferation. Interacts with GRB10. Interacts with PTPN1 and PTPN2. Interacts with HSP90AA1 and HSP90AB1; the interaction suppresses MET kinase activity. Interacts with tensin TNS3. Interacts (when phosphorylated) with tensin TNS4 (via SH2 domain); the interaction increases MET protein stability by inhibiting MET endocytosis and subsequent lysosomal degradation. In terms of processing, autophosphorylated in response to ligand binding on Tyr-1234 and Tyr-1235 in the kinase domain leading to further phosphorylation of Tyr-1349 and Tyr-1356 in the C-terminal multifunctional docking site. Dephosphorylated by PTPRJ at Tyr-1349 and Tyr-1365. Dephosphorylated by PTPN1 and PTPN2. Ubiquitinated. Ubiquitination by CBL regulates the receptor stability and activity through proteasomal degradation. Post-translationally, O-mannosylation of IPT/TIG domains by TMEM260 is required for protein maturation. O-mannosylated residues are composed of single mannose glycans that are not elongated or modified.

It localises to the membrane. The enzyme catalyses L-tyrosyl-[protein] + ATP = O-phospho-L-tyrosyl-[protein] + ADP + H(+). With respect to regulation, in its inactive state, the C-terminal tail interacts with the catalytic domain and inhibits the kinase activity. Upon ligand binding, the C-terminal tail is displaced and becomes phosphorylated, thus increasing the kinase activity. Functionally, receptor tyrosine kinase that transduces signals from the extracellular matrix into the cytoplasm by binding to hepatocyte growth factor/HGF ligand. Regulates many physiological processes including proliferation, scattering, morphogenesis and survival. Ligand binding at the cell surface induces autophosphorylation of MET on its intracellular domain that provides docking sites for downstream signaling molecules. Following activation by ligand, interacts with the PI3-kinase subunit PIK3R1, PLCG1, SRC, GRB2, STAT3 or the adapter GAB1. Recruitment of these downstream effectors by MET leads to the activation of several signaling cascades including the RAS-ERK, PI3 kinase-AKT, or PLCgamma-PKC. The RAS-ERK activation is associated with the morphogenetic effects while PI3K/AKT coordinates prosurvival effects. During embryonic development, MET signaling plays a role in gastrulation, development and migration of muscles and neuronal precursors, angiogenesis and kidney formation. In adults, participates in wound healing as well as organ regeneration and tissue remodeling. Also promotes differentiation and proliferation of hematopoietic cells. The chain is Hepatocyte growth factor receptor (MET) from Sus scrofa (Pig).